Here is a 239-residue protein sequence, read N- to C-terminus: Mitochondrial fission factor homolog B (239 aa).

At 1 to 219 (MAEINRMQYE…ENKERVKHEM (219 aa)) the chain is on the cytoplasmic side. The disordered stretch occupies residues 107–139 (EGPAPATPHSKEVRSSGHLKRDGLASENSLRQN). Residues 115–130 (HSKEVRSSGHLKRDGL) are compositionally biased toward basic and acidic residues. A coiled-coil region spans residues 184-214 (DLALADAASLRRQIIKLNRRLLLLEEENKER). A helical; Anchor for type IV membrane protein transmembrane segment spans residues 220–237 (TMYSIIIIFGLLNSWLWF). The Extracellular segment spans residues 238-239 (RR).

It belongs to the Tango11 family.

The protein localises to the mitochondrion outer membrane. Its subcellular location is the peroxisome. Plays a role in mitochondrial and peroxisomal fission. Promotes the recruitment and association of the fission mediator dynamin-related protein 1 (DNM1L) to the mitochondrial surface. This is Mitochondrial fission factor homolog B (mff-b) from Xenopus laevis (African clawed frog).